We begin with the raw amino-acid sequence, 245 residues long: Small ribosomal subunit protein uS2 (245 aa).

The protein belongs to the universal ribosomal protein uS2 family.

This Pseudomonas fluorescens (strain ATCC BAA-477 / NRRL B-23932 / Pf-5) protein is Small ribosomal subunit protein uS2.